We begin with the raw amino-acid sequence, 315 residues long: Tyrosine recombinase XerC (315 aa).

A Core-binding (CB) domain is found at 13-104; it reads ADLAAAREEW…GVRSLLRHLE (92 aa). The region spanning 125-309 is the Tyr recombinase domain; the sequence is SLPKPLTADD…DTQRLLEVYD (185 aa). Residues Arg-168, Lys-193, His-261, Arg-264, and His-287 contribute to the active site. Tyr-296 serves as the catalytic O-(3'-phospho-DNA)-tyrosine intermediate.

It belongs to the 'phage' integrase family. XerC subfamily. As to quaternary structure, forms a cyclic heterotetrameric complex composed of two molecules of XerC and two molecules of XerD.

The protein resides in the cytoplasm. Functionally, site-specific tyrosine recombinase, which acts by catalyzing the cutting and rejoining of the recombining DNA molecules. The XerC-XerD complex is essential to convert dimers of the bacterial chromosome into monomers to permit their segregation at cell division. It also contributes to the segregational stability of plasmids. This is Tyrosine recombinase XerC from Brucella suis biovar 1 (strain 1330).